We begin with the raw amino-acid sequence, 135 residues long: Small ribosomal subunit protein uS12 (135 aa).

Aspartate 89 carries the 3-methylthioaspartic acid modification. The disordered stretch occupies residues glycine 106 to lysine 135. A compositionally biased stretch (basic residues) spans glycine 113–lysine 123. Low complexity predominate over residues proline 124–lysine 135.

The protein belongs to the universal ribosomal protein uS12 family. Part of the 30S ribosomal subunit. Contacts proteins S8 and S17. May interact with IF1 in the 30S initiation complex.

Functionally, with S4 and S5 plays an important role in translational accuracy. Its function is as follows. Interacts with and stabilizes bases of the 16S rRNA that are involved in tRNA selection in the A site and with the mRNA backbone. Located at the interface of the 30S and 50S subunits, it traverses the body of the 30S subunit contacting proteins on the other side and probably holding the rRNA structure together. The combined cluster of proteins S8, S12 and S17 appears to hold together the shoulder and platform of the 30S subunit. The polypeptide is Small ribosomal subunit protein uS12 (Synechococcus sp. (strain JA-3-3Ab) (Cyanobacteria bacterium Yellowstone A-Prime)).